The following is a 717-amino-acid chain: MESNAFGSSHLPSQALVVLSEAASGLHEALRGQRPFPSRVIPFDFPLLQLPDAKDLHNMSLVGNYFNPHLLLNHGMLVANGAAAAAAAAGAGPASYFASDRSPLGKPSVLSNFSLPSAFSPPKYIGISLDQNLFNGSESFRTDSASPTCTSHESMEGSQDYDAVEKGESPRSNNSQDPRDLRHLHNAGKSHQALATSSSASSSSSSSCSTSNPAISTATSSVAVSMASHLAASSPHHHPHTHAHSHPHPLAHPHAHSHHHVGHHVGAPPVSTAVTTHHHMAHPHPLSHHHAAHHAALASLSMAGLRAVPGGLSLVSGLQAAAAGGAIPEMCPVCGLKLSAEEWHTHFLTELDRLYKLSAGFERASLQATYMFAPPCPAQENAIRTSHNRWETFQRIRNNRQNRLRLKVRKRKYGEMYMMESLYCSSCPICKRKYALETGKIPPEDDAKSQEEIETVDVESCNDEVPDSGSELATPSSGSSGTVMPPSSMHNSNSQPGKLDGILYRTGCVLSQKDPHPDEHDVSTNVTTASSSSWPGEAPTQAHISVKTVSELSSTTHHYYNADSCGVGVNDTNSSSSTHNNGGGSNKDLMMDTASCQNDSDEDVIVDDDDTVKLTSKINYGKIQRRQDEQNVGSSRSLENISPVEERPRSEPQVSSTEPGPMDISHNNNNNNNNNNNNSNSNNNNNPSTKYAESMENSLSQLSSMGVPGLTQLDTKA.

The span at 140 to 152 (FRTDSASPTCTSH) shows a compositional bias: polar residues. Disordered stretches follow at residues 140–214 (FRTD…SNPA), 229–270 (HLAA…APPV), 440–498 (KIPP…QPGK), 511–539 (SQKD…GEAP), 563–594 (DSCG…MDTA), and 624–717 (QRRQ…DTKA). Residues 195–214 (ATSSSASSSSSSSCSTSNPA) are compositionally biased toward low complexity. A compositionally biased stretch (basic residues) spans 235–263 (PHHHPHTHAHSHPHPLAHPHAHSHHHVGH). Over residues 442–451 (PPEDDAKSQE) the composition is skewed to basic and acidic residues. Residues 452 to 466 (EIETVDVESCNDEVP) are compositionally biased toward acidic residues. The segment covering 471-482 (ELATPSSGSSGT) has biased composition (polar residues). Residues 513 to 522 (KDPHPDEHDV) show a composition bias toward basic and acidic residues. 2 stretches are compositionally biased toward low complexity: residues 523 to 533 (STNVTTASSSS) and 570 to 580 (NDTNSSSSTHN). The segment covering 630–640 (QNVGSSRSLEN) has biased composition (polar residues). The segment covering 667–686 (NNNNNNNNNNNNSNSNNNNN) has biased composition (low complexity). Residues 687 to 704 (PSTKYAESMENSLSQLSS) are compositionally biased toward polar residues.

In terms of tissue distribution, in embryos, expressed specifically in M12 (at protein level).

It localises to the nucleus. Required for the correct synaptic targeting of motoneurons RP5 and V to muscle 12 (M12). May be involved in the negative regulation of Tl in M12. Involved in the correct patterning of veins in the proximal (costal) region of the wing blade. The chain is Protein Teyrha-meyrha from Drosophila melanogaster (Fruit fly).